Reading from the N-terminus, the 1153-residue chain is AP-3 complex subunit delta-1 (1153 aa).

Alanine 2 is subject to N-acetylalanine. HEAT repeat units lie at residues lysine 34 to aspartate 71, phenylalanine 77 to asparagine 114, aspartate 142 to glutamate 179, serine 180 to lysine 216, arginine 254 to serine 292, alanine 299 to lysine 336, valine 338 to leucine 373, glutamate 375 to tyrosine 409, threonine 431 to leucine 468, glutamine 497 to glutamine 535, and alanine 548 to leucine 585. Disordered regions lie at residues glutamate 629–threonine 696 and lysine 726–serine 920. Phosphoserine is present on residues serine 632, serine 634, serine 636, and serine 658. Residues glutamate 639–glutamate 675 are compositionally biased toward basic and acidic residues. Positions glutamate 659–asparagine 679 form a coiled coil. The residue at position 688 (serine 688) is a Phosphoserine. Residues valine 725–arginine 756 are a coiled coil. The segment covering lysine 726–aspartate 740 has biased composition (basic and acidic residues). Basic residues predominate over residues lysine 741–serine 758. 2 positions are modified to phosphoserine: serine 758 and serine 759. The residue at position 762 (threonine 762) is a Phosphothreonine. Phosphoserine is present on residues serine 764, alanine 785, serine 788, lysine 828, and serine 829. The span at valine 777–aspartate 794 shows a compositional bias: acidic residues. The segment covering proline 795–lysine 839 has biased composition (basic and acidic residues). 2 stretches are compositionally biased toward basic residues: residues lysine 840 to glutamate 853 and glutamate 863 to lysine 879. A coiled-coil region spans residues lysine 845–serine 869. Position 931 is a phosphoserine (valine 931).

This sequence belongs to the adaptor complexes large subunit family. As to quaternary structure, AP-3 associates with the BLOC-1 complex. Adaptor protein complex 3 (AP-3) is a heterotetramer composed of two large adaptins (delta-type subunit AP3D1 and beta-type subunit AP3B1 or AP3B2), a medium adaptin (mu-type subunit AP3M1 or AP3M2) and a small adaptin (sigma-type subunit APS1 or AP3S2). Interacts with SLC30A2. Interacts with CLN3 (via dileucine motif); this interaction facilitates lysosomal targeting. As to expression, present in all adult tissues examined with the highest levels in skeletal muscle, heart, pancreas and testis.

The protein localises to the cytoplasm. The protein resides in the golgi apparatus membrane. In terms of biological role, part of the AP-3 complex, an adaptor-related complex which is not clathrin-associated. The complex is associated with the Golgi region as well as more peripheral structures. It facilitates the budding of vesicles from the Golgi membrane and may be directly involved in trafficking to lysosomes. Involved in process of CD8+ T-cell and NK cell degranulation. In concert with the BLOC-1 complex, AP-3 is required to target cargos into vesicles assembled at cell bodies for delivery into neurites and nerve terminals. The protein is AP-3 complex subunit delta-1 (AP3D1) of Homo sapiens (Human).